We begin with the raw amino-acid sequence, 282 residues long: Putative phosphite transport system permease protein HtxC (282 aa).

Helical transmembrane passes span 23–43, 81–101, 130–150, and 239–259; these read HFAT…VCQI, LAMA…LALM, VYAL…VLAI, and FNKM…IDFI. Residues 77–260 form the ABC transmembrane type-1 domain; it reads AGETLAMATI…LMVSAIDFIS (184 aa).

Belongs to the binding-protein-dependent transport system permease family.

Its subcellular location is the cell inner membrane. Its function is as follows. Probably forms part of a binding-protein-dependent hypophosphite transporter. The protein is Putative phosphite transport system permease protein HtxC (htxC) of Stutzerimonas stutzeri (Pseudomonas stutzeri).